The chain runs to 291 residues: Small ribosomal subunit biogenesis GTPase RsgA (291 aa).

The 159-residue stretch at 63 to 221 (HNELKRPPVS…IADTPGFSAL (159 aa)) folds into the CP-type G domain. GTP is bound by residues 112–115 (TKKD) and 164–172 (GQSGVGKST). Zn(2+) contacts are provided by cysteine 245, cysteine 250, histidine 252, and cysteine 258.

This sequence belongs to the TRAFAC class YlqF/YawG GTPase family. RsgA subfamily. As to quaternary structure, monomer. Associates with 30S ribosomal subunit, binds 16S rRNA. The cofactor is Zn(2+).

It localises to the cytoplasm. In terms of biological role, one of several proteins that assist in the late maturation steps of the functional core of the 30S ribosomal subunit. Helps release RbfA from mature subunits. May play a role in the assembly of ribosomal proteins into the subunit. Circularly permuted GTPase that catalyzes slow GTP hydrolysis, GTPase activity is stimulated by the 30S ribosomal subunit. This is Small ribosomal subunit biogenesis GTPase RsgA from Staphylococcus haemolyticus (strain JCSC1435).